We begin with the raw amino-acid sequence, 279 residues long: Thymidylate synthase (279 aa).

A dUMP-binding site is contributed by 141-142; sequence RR. Cysteine 161 serves as the catalytic Nucleophile. DUMP-binding positions include 181 to 184, asparagine 192, and 222 to 224; these read RSND and HIY. Aspartate 184 is a binding site for (6R)-5,10-methylene-5,6,7,8-tetrahydrofolate. Position 278 (alanine 278) interacts with (6R)-5,10-methylene-5,6,7,8-tetrahydrofolate.

Belongs to the thymidylate synthase family. Bacterial-type ThyA subfamily. As to quaternary structure, homodimer.

The protein resides in the cytoplasm. It catalyses the reaction dUMP + (6R)-5,10-methylene-5,6,7,8-tetrahydrofolate = 7,8-dihydrofolate + dTMP. It participates in pyrimidine metabolism; dTTP biosynthesis. Catalyzes the reductive methylation of 2'-deoxyuridine-5'-monophosphate (dUMP) to 2'-deoxythymidine-5'-monophosphate (dTMP) while utilizing 5,10-methylenetetrahydrofolate (mTHF) as the methyl donor and reductant in the reaction, yielding dihydrofolate (DHF) as a by-product. This enzymatic reaction provides an intracellular de novo source of dTMP, an essential precursor for DNA biosynthesis. The sequence is that of Thymidylate synthase from Bacillus licheniformis (strain ATCC 14580 / DSM 13 / JCM 2505 / CCUG 7422 / NBRC 12200 / NCIMB 9375 / NCTC 10341 / NRRL NRS-1264 / Gibson 46).